The sequence spans 122 residues: Large ribosomal subunit protein uL14 (122 aa).

Belongs to the universal ribosomal protein uL14 family. In terms of assembly, part of the 50S ribosomal subunit. Forms a cluster with proteins L3 and L19. In the 70S ribosome, L14 and L19 interact and together make contacts with the 16S rRNA in bridges B5 and B8.

Binds to 23S rRNA. Forms part of two intersubunit bridges in the 70S ribosome. The sequence is that of Large ribosomal subunit protein uL14 from Mycobacterium leprae (strain TN).